Reading from the N-terminus, the 72-residue chain is Alpha-elapitoxin-Dv2b (72 aa).

5 disulfides stabilise this stretch: Cys3/Cys21, Cys14/Cys42, Cys27/Cys31, Cys46/Cys57, and Cys58/Cys63.

The protein belongs to the three-finger toxin family. Long-chain subfamily. Type II alpha-neurotoxin sub-subfamily. In terms of processing, neurotoxin 4.7.3 differs from 4.9.3 only in that Trp-26 has undergone partial photooxidation. In terms of tissue distribution, expressed by the venom gland.

It is found in the secreted. Its function is as follows. Binds with high affinity to muscular (alpha-1/CHRNA1) and neuronal (alpha-7/CHRNA7) nicotinic acetylcholine receptor (nAChR) and inhibits acetylcholine from binding to the receptor, thereby impairing neuromuscular and neuronal transmission. The chain is Alpha-elapitoxin-Dv2b from Dendroaspis viridis (Western green mamba).